The chain runs to 239 residues: Small ribosomal subunit protein uS3 (239 aa).

In terms of domain architecture, KH type-2 spans 39–109; sequence IRAMIQEIPE…KVQIKIKEVK (71 aa). Positions 219–239 are disordered; the sequence is GALLKKQRRPRTEKPAQAGRQ.

This sequence belongs to the universal ribosomal protein uS3 family. In terms of assembly, part of the 30S ribosomal subunit. Forms a tight complex with proteins S10 and S14.

Its function is as follows. Binds the lower part of the 30S subunit head. Binds mRNA in the 70S ribosome, positioning it for translation. In Treponema denticola (strain ATCC 35405 / DSM 14222 / CIP 103919 / JCM 8153 / KCTC 15104), this protein is Small ribosomal subunit protein uS3.